The primary structure comprises 352 residues: Cellular tumor antigen p53 (352 aa).

The segment at 1–48 (MDPVPDLPESQGSFQELWETVSYPPLETLSLPTVNEPTGSWVATGDMF) is transcription activation (acidic). A DNA-binding region spans residues 87–273 (DYPGSYELEL…KTEEESRQKT (187 aa)). 4 residues coordinate Zn(2+): cysteine 161, histidine 164, cysteine 220, and cysteine 224. Residues 254–261 (RICACPGR) form an interaction with DNA region. Over residues 262 to 271 (DRKTEEESRQ) the composition is skewed to basic and acidic residues. The tract at residues 262 to 303 (DRKTEEESRQKTQPKKRKVTPNTSSSKRKKSHSSGEEEDNRE) is disordered. Residues 276-291 (KKRKVTPNTSSSKRKK) carry the Bipartite nuclear localization signal motif. The interval 302 to 331 (REVFHFEVYGRERYEFLKKINDGLELLEKE) is oligomerization. The Nuclear export signal motif lies at 316-327 (EFLKKINDGLEL). Positions 330-352 (KESKSKNKDSGMVPSSGKKLKSN) are disordered. Positions 334–350 (SKNKDSGMVPSSGKKLK) are basic (repression of DNA-binding). Residue serine 351 is modified to Phosphoserine.

This sequence belongs to the p53 family. Binds DNA as a homotetramer. The cofactor is Zn(2+).

The protein localises to the cytoplasm. It localises to the nucleus. Functionally, multifunctional transcription factor that induces cell cycle arrest, DNA repair or apoptosis upon binding to its target DNA sequence. Acts as a tumor suppressor in many tumor types; induces growth arrest or apoptosis depending on the physiological circumstances and cell type. Negatively regulates cell division by controlling expression of a set of genes required for this process. One of the activated genes is an inhibitor of cyclin-dependent kinases. Apoptosis induction seems to be mediated either by stimulation of BAX and FAS antigen expression, or by repression of Bcl-2 expression. The sequence is that of Cellular tumor antigen p53 (tp53) from Oryzias latipes (Japanese rice fish).